Here is a 616-residue protein sequence, read N- to C-terminus: Chaperone protein HscA (616 aa).

This sequence belongs to the heat shock protein 70 family.

Its function is as follows. Chaperone involved in the maturation of iron-sulfur cluster-containing proteins. Has a low intrinsic ATPase activity which is markedly stimulated by HscB. Involved in the maturation of IscU. This Salmonella agona (strain SL483) protein is Chaperone protein HscA.